The sequence spans 271 residues: 4,5-DOPA dioxygenase extradiol (271 aa).

Positions 22, 57, 177, and 234 each coordinate Zn(2+).

The protein belongs to the DODA-type extradiol aromatic ring-opening dioxygenase family. As to quaternary structure, monomer. Zn(2+) serves as cofactor.

Its subcellular location is the cytoplasm. The catalysed reaction is L-dopa + O2 = 4-(L-alanin-3-yl)-2-hydroxy-cis,cis-muconate 6-semialdehyde + H(+). Its function is as follows. In vitro, opens the cyclic ring of dihydroxy-phenylalanine (DOPA) between carbons 4 and 5, thus producing an unstable seco-DOPA that rearranges nonenzymatically to betalamic acid. The physiological substrate is unknown. The protein is 4,5-DOPA dioxygenase extradiol (ygiD) of Escherichia coli (strain K12).